Consider the following 372-residue polypeptide: Mitogen-activated protein kinase spk1 (372 aa).

A compositionally biased stretch (polar residues) spans 1–25 (MASATSTPTIADGNSNKESVATSRS). Residues 1–29 (MASATSTPTIADGNSNKESVATSRSPHTH) form a disordered region. One can recognise a Protein kinase domain in the interval 39–327 (YEMINLIGQG…AEEALKHPYV (289 aa)). ATP-binding positions include 45–53 (IGQGAYGVV) and K68. The Proton acceptor role is filled by D163. A Phosphothreonine modification is found at T199. Positions 199 to 201 (TEY) match the TXY motif. At Y201 the chain carries Phosphotyrosine.

This sequence belongs to the protein kinase superfamily. CMGC Ser/Thr protein kinase family. MAP kinase subfamily. It depends on Mg(2+) as a cofactor. In terms of processing, dually phosphorylated on Thr-199 and Tyr-201, which activates the enzyme.

Its subcellular location is the nucleus. It catalyses the reaction L-seryl-[protein] + ATP = O-phospho-L-seryl-[protein] + ADP + H(+). The catalysed reaction is L-threonyl-[protein] + ATP = O-phospho-L-threonyl-[protein] + ADP + H(+). Its activity is regulated as follows. Activated by tyrosine and threonine phosphorylation. Functionally, involved in mating signal transduction pathway. In Schizosaccharomyces pombe (strain 972 / ATCC 24843) (Fission yeast), this protein is Mitogen-activated protein kinase spk1 (spk1).